The primary structure comprises 322 residues: MKVVALFLFGLALAAANPSWEEFKGKFGRKYVDLEEERYRLNVFLDNLQYIEEFNKKYERGEVTYNLAINQFSDMTNEKFNAVMKGYKKGPRPAAVFTSTDAAPESTEVDWRTKGAVTPVKDQGQCGSCWAFSTTGGIEGQHFLKTGRLVSLSEQQLVDCAGGSYYNQGCNGGWVERAIMYVRDNGGVDTESSYPYEARDNTCRFNSNTIGATCTGYVGIAQGSESALKTATRDIGPISVAIDASHRSFQSYYTGVYYEPSCSSSQLDHAVLAVGYGSEGGQDFWLVKNSWATSWGESGYIKMARNRNNNCGIATDACYPTV.

An N-terminal signal peptide occupies residues methionine 1–alanine 16. Residues asparagine 17 to glutamate 105 constitute a propeptide, activation peptide. Intrachain disulfides connect cysteine 126/cysteine 170, cysteine 160/cysteine 203, and cysteine 262/cysteine 311. Cysteine 129 is a catalytic residue. Active-site residues include histidine 269 and asparagine 289.

Belongs to the peptidase C1 family.

Inhibited by E-64, antipain, leupeptin, heavy metal ions, iodoacetic acid, dithionitrobenzene, p-hydroxymercuri-benzoate; activated by mercaptoethanol and dithiothreitol. The sequence is that of Digestive cysteine proteinase 1 (LCP1) from Homarus americanus (American lobster).